Consider the following 292-residue polypeptide: Early E4 34 kDa protein (292 aa).

It belongs to the adenoviridae E4 30 to 34 kDa protein family. In terms of assembly, interacts with E1B-55k.

The protein resides in the host nucleus. It localises to the host cytoplasm. Its function is as follows. Plays a major role to prevent cellular inhibition of viral genome replication by nuclear bodies. Assembles an SCF-like E3 ubiquitin ligase complex based on the cellular proteins ELOB, ELOC, CUL5 and RBX1, in cooperation with viral E1B-55K. This viral RING-type ligase ubiquitinates cellular substrates prior to proteasomal degradation: p53/TP53, LIG4, MRE11-RAD50-NBS1 (MRN) complex, ITGA3, DAXX and BLM. The chain is Early E4 34 kDa protein from Human adenovirus D serotype 9 (HAdV-9).